We begin with the raw amino-acid sequence, 425 residues long: MQIYMVGGAVRDRLLGRPVNDHDWVVVGATPDDMVARGYLPVGRDFPVFLHPETREEYALARTERKSGRGYRGFVVQTSPDVTLEEDLSRRDLTINAIAASADWTGAEDLFDPYGGARDLQARVLRHVTDSFREDPVRILRVARFAARFTDFTVAPETMQLMREMVHDGEADHLVPERVWQELARGLMEPQPSRMFDVLRDCGALAVVLPEVERLWGVPQRPEYHPEVDTGVHLMMVLDMAAHLQAPLTVRFACLTHDLGKGTTPHDVLPRHIGHEQRSARLLKAVCERLRVPVECRELADVVAREHGNIHRSGDLGAAALVRLLERCDAIRKPARLDEILLACECDARGRLGFADRPYPQRARINAALAAVQSVTTSSVAAHAAQLGLSGPKVGEMIHAARVQAVADWLHATAQPAPEPRGNAG.

Residues Gly-8 and Arg-11 each coordinate ATP. Positions 8 and 11 each coordinate CTP. The Mg(2+) site is built by Asp-21 and Asp-23. ATP is bound by residues Arg-91, Arg-141, and Arg-144. CTP is bound by residues Arg-91, Arg-141, and Arg-144. One can recognise an HD domain in the interval 230 to 331 (TGVHLMMVLD…VRLLERCDAI (102 aa)).

The protein belongs to the tRNA nucleotidyltransferase/poly(A) polymerase family. Bacterial CCA-adding enzyme type 1 subfamily. In terms of assembly, monomer. Can also form homodimers and oligomers. Mg(2+) is required as a cofactor. It depends on Ni(2+) as a cofactor.

It carries out the reaction a tRNA precursor + 2 CTP + ATP = a tRNA with a 3' CCA end + 3 diphosphate. The enzyme catalyses a tRNA with a 3' CCA end + 2 CTP + ATP = a tRNA with a 3' CCACCA end + 3 diphosphate. Functionally, catalyzes the addition and repair of the essential 3'-terminal CCA sequence in tRNAs without using a nucleic acid template. Adds these three nucleotides in the order of C, C, and A to the tRNA nucleotide-73, using CTP and ATP as substrates and producing inorganic pyrophosphate. tRNA 3'-terminal CCA addition is required both for tRNA processing and repair. Also involved in tRNA surveillance by mediating tandem CCA addition to generate a CCACCA at the 3' terminus of unstable tRNAs. While stable tRNAs receive only 3'-terminal CCA, unstable tRNAs are marked with CCACCA and rapidly degraded. The chain is Multifunctional CCA protein from Acidovorax ebreus (strain TPSY) (Diaphorobacter sp. (strain TPSY)).